Here is a 128-residue protein sequence, read N- to C-terminus: Nucleoside diphosphate kinase B (128 aa).

Position 1 is an N-acetylmethionine (Met-1). Residues Lys-9, Phe-39, Thr-70, Arg-81, and Asn-91 each contribute to the ATP site. His-94 (pros-phosphohistidine intermediate) is an active-site residue.

It belongs to the NDK family. Requires Mg(2+) as cofactor.

It is found in the cytoplasm. Its subcellular location is the nucleus. The protein resides in the cell projection. It localises to the lamellipodium. The protein localises to the ruffle. It carries out the reaction a 2'-deoxyribonucleoside 5'-diphosphate + ATP = a 2'-deoxyribonucleoside 5'-triphosphate + ADP. It catalyses the reaction a ribonucleoside 5'-diphosphate + ATP = a ribonucleoside 5'-triphosphate + ADP. Major role in the synthesis of nucleoside triphosphates other than ATP. This chain is Nucleoside diphosphate kinase B (nme2), found in Merluccius bilinearis (Silver hake).